The following is a 465-amino-acid chain: Serine carboxypeptidase-like 19 (465 aa).

A signal peptide spans 1–23 (MRNLSFIVLFLLTLFFIHHLVDA). 77–79 (TGG) contacts substrate. Disulfide bonds link Cys-82–Cys-353, Cys-246–Cys-260, and Cys-284–Cys-320. Asn-103 carries an N-linked (GlcNAc...) asparagine glycan. Substrate is bound at residue 177–179 (DSY). Ser-178 is an active-site residue. Positions 292 to 317 (DTPNIRTDRRRVMKEFSVNDSSSLPP) are cleaved as a propeptide — linker peptide. Residues Asn-310 and Asn-373 are each glycosylated (N-linked (GlcNAc...) asparagine). The active site involves Asp-389. Asn-405 carries N-linked (GlcNAc...) asparagine glycosylation. A substrate-binding site is contributed by 439–443 (KGGGH). His-443 is an active-site residue.

It belongs to the peptidase S10 family. In terms of assembly, heterodimer. N-glycosylated. In terms of tissue distribution, expressed in roots and flowers, and at lower levels in young leaves and seedlings. Expressed in mature seeds and detected in expanding siliques.

The protein resides in the secreted. It carries out the reaction 1-O-(trans-sinapoyl)-beta-D-glucose + choline = O-sinapoylcholine + D-glucose. With respect to regulation, slightly inhibited by phenylmethylsulfonyl fluoride (PMSF). In terms of biological role, involved in plants secondary metabolism. Functions as acyltransferase to form the sinapate ester sinapoylcholine also known as sinapine. Able to convert in vitro benzoylglucose into benzoylcholine. The polypeptide is Serine carboxypeptidase-like 19 (Arabidopsis thaliana (Mouse-ear cress)).